A 253-amino-acid chain; its full sequence is Claudin domain-containing protein 1 (253 aa).

A helical membrane pass occupies residues 5 to 25 (FATAFVIACVLSLISTIYMAA). N-linked (GlcNAc...) asparagine glycans are attached at residues N42 and N72. 3 consecutive transmembrane segments (helical) span residues 141 to 161 (FLLP…GLCA), 175 to 195 (ILHL…VAGI), and 216 to 236 (FCLA…FIWA).

The protein belongs to the PMP-22/EMP/MP20 family. In the brain, highly expressed in endothelial cells of the cerebellum compared to other regions (at protein level).

It localises to the cell junction. It is found in the tight junction. Its subcellular location is the cell membrane. Its function is as follows. Plays a role in negatively regulating the permeability of cells to small molecules. This Mus musculus (Mouse) protein is Claudin domain-containing protein 1 (Cldnd1).